The sequence spans 232 residues: uncharacterized protein (232 aa).

This is an uncharacterized protein from Homo sapiens (Human).